A 109-amino-acid chain; its full sequence is Spermidine export protein MdtI (109 aa).

Residues 1–5 (MAQFE) lie on the Periplasmic side of the membrane. The helical transmembrane segment at 6–26 (WVHAAWLALAIVLEIIANVFL) threads the bilayer. At 27–35 (KFSDGFRRK) the chain is on the cytoplasmic side. Residues 36–56 (IFGLLSLAAVLAAFSALSQAV) traverse the membrane as a helical segment. Topologically, residues 57 to 63 (KGIDLSV) are periplasmic. The helical transmembrane segment at 64–84 (AYALWGGFGIAATLAAGWILF) threads the bilayer. At 85–87 (GQR) the chain is on the cytoplasmic side. Residues 88-108 (LNRKGWIGLVLLLAGMIMVKL) traverse the membrane as a helical segment. Position 109 (A109) is a topological domain, periplasmic.

This sequence belongs to the drug/metabolite transporter (DMT) superfamily. Small multidrug resistance (SMR) (TC 2.A.7.1) family. MdtI subfamily. As to quaternary structure, forms a complex with MdtJ.

Its subcellular location is the cell inner membrane. Catalyzes the excretion of spermidine. The sequence is that of Spermidine export protein MdtI (mdtI) from Escherichia coli O6:H1 (strain CFT073 / ATCC 700928 / UPEC).